A 597-amino-acid chain; its full sequence is Glypican-3 (597 aa).

The first 24 residues, 1–24 (MAGTVRTACLLVAMLLGLGCLGQA), serve as a signal peptide directing secretion. At Gln25 the chain carries Pyrrolidone carboxylic acid. Disulfide bonds link Cys34/Cys71, Cys64/Cys261, Cys72/Cys264, Cys196/Cys348, Cys251/Cys284, Cys273/Cys421, and Cys277/Cys409. N-linked (GlcNAc...) asparagine glycans are attached at residues Asn123 and Asn240. A Phosphoserine modification is found at Ser351. Asn417 carries N-linked (GlcNAc...) asparagine glycosylation. O-linked (Xyl...) (glycosaminoglycan) serine glycosylation is found at Ser494 and Ser508. Residues 533–553 (DAPGNKQHGNQKDNEITTSHS) are disordered.

It belongs to the glypican family. In terms of assembly, heterodimer; disulfide-linked. Cleavage by a furin-like convertase results in production of alpha and beta chains which form a disulfide-linked heterodimer. Interacts with DPP4. Interacts with FGF2. Interacts with WNT5A. Also interacts with WNT3A and WNT7B. Interacts with hedgehog protein SHH; the heparan sulfate chains are not required for the interaction. Also interacts with hedgehog protein IHH. Interacts with CD81. Interacts with Wnt receptors FZD4, FZD7 and FZD8; the heparan sulfate chains are required for the interaction. In terms of processing, O-glycosylated; contains heparan sulfate and/or chondroitin sulfate. Cleaved intracellularly by a furin-like convertase to generate 2 subunits, alpha and beta, which remain associated through disulfide bonds and are associated with the cell surface via the GPI-anchor. This processing is essential for its role in inhibition of hedgehog signaling. A second proteolytic event may result in cleavage of the protein on the cell surface, separating it from the GPI-anchor and leading to its shedding from the cell surface.

It is found in the cell membrane. Functionally, cell surface proteoglycan. Negatively regulates the hedgehog signaling pathway when attached via the GPI-anchor to the cell surface by competing with the hedgehog receptor PTC1 for binding to hedgehog proteins. Binding to the hedgehog protein SHH triggers internalization of the complex by endocytosis and its subsequent lysosomal degradation. Positively regulates the canonical Wnt signaling pathway by binding to the Wnt receptor Frizzled and stimulating the binding of the Frizzled receptor to Wnt ligands. Positively regulates the non-canonical Wnt signaling pathway. Binds to CD81 which decreases the availability of free CD81 for binding to the transcriptional repressor HHEX, resulting in nuclear translocation of HHEX and transcriptional repression. Inhibits the dipeptidyl peptidase activity of DPP4. Plays a role in limb patterning and skeletal development by controlling the cellular response to BMP4. Modulates the effects of growth factors BMP2, BMP7 and FGF7 on renal branching morphogenesis. Required for coronary vascular development. Plays a role in regulating cell movements during gastrulation. This Rattus norvegicus (Rat) protein is Glypican-3 (Gpc3).